A 318-amino-acid chain; its full sequence is Homoserine kinase (318 aa).

97–107 is a binding site for ATP; sequence PIGSGLGSSAC.

This sequence belongs to the GHMP kinase family. Homoserine kinase subfamily.

It localises to the cytoplasm. It catalyses the reaction L-homoserine + ATP = O-phospho-L-homoserine + ADP + H(+). Its pathway is amino-acid biosynthesis; L-threonine biosynthesis; L-threonine from L-aspartate: step 4/5. Catalyzes the ATP-dependent phosphorylation of L-homoserine to L-homoserine phosphate. The sequence is that of Homoserine kinase from Vibrio vulnificus (strain CMCP6).